The primary structure comprises 188 residues: uncharacterized protein (188 aa).

This is an uncharacterized protein from Acidianus convivator (ABV).